Reading from the N-terminus, the 463-residue chain is Mitochondrial dynamics protein MID51 (463 aa).

The Mitochondrial intermembrane segment spans residues 1–23 (MAGAGERKGKKDDNGIGTAIDFV). Residues 24–46 (LSNARLVLGVGGAAMLGIATLAV) traverse the membrane as a helical segment. Residues 47-463 (KRMYDRAISA…LSEPEVLLQT (417 aa)) are Cytoplasmic-facing. Residues 49–195 (MYDRAISAPT…LSGSLYDDLQ (147 aa)) form a dimerization region. A phosphoserine mark is found at S55, S59, S79, and S94. Residues 57–77 (PTSPTRLSHSGKRSWEEPNWM) form a disordered region. Positions 160–169 (AAVDICAELR) are important for interaction with DNM1L. ADP contacts are provided by S187, S189, and H201. Positions 234 to 243 (RRENPEYFPR) are important for interaction with DNM1L. ADP contacts are provided by S340, R342, and K368.

Belongs to the MID49/MID51 family. Homodimer. Interacts with DNM1L.

The protein resides in the mitochondrion outer membrane. Mitochondrial outer membrane protein which regulates mitochondrial fission/fusion dynamics. Promotes the recruitment and association of the fission mediator dynamin-related protein 1 (DNM1L) to the mitochondrial surface independently of the mitochondrial fission FIS1 and MFF proteins. Regulates DNM1L GTPase activity and DNM1L oligomerization. Binds ADP and can also bind GDP, although with lower affinity. Does not bind CDP, UDP, ATP, AMP or GTP. Inhibits DNM1L GTPase activity in the absence of bound ADP. Requires ADP to stimulate DNM1L GTPase activity and the assembly of DNM1L into long, oligomeric tubules with a spiral pattern, as opposed to the ring-like DNM1L oligomers observed in the absence of bound ADP. Does not require ADP for its function in recruiting DNM1L. This is Mitochondrial dynamics protein MID51 (Mief1) from Rattus norvegicus (Rat).